Consider the following 256-residue polypeptide: Protein YIPF7 (256 aa).

The Cytoplasmic portion of the chain corresponds to 1 to 125; the sequence is MSNLAQFDSD…VDGSIMNETD (125 aa). 2 stretches are compositionally biased toward polar residues: residues 18–31 and 38–48; these read IDNQ…SNAY and RKQQAGEQPQP. The disordered stretch occupies residues 18–48; the sequence is IDNQEQSGNDSNAYGNLYGSRKQQAGEQPQP. The helical transmembrane segment at 126–146 threads the bilayer; it reads LTGPILFCVALGATLLLAGKV. Gln147 is a topological domain (extracellular). A helical membrane pass occupies residues 148-168; the sequence is FGYVYGMSAIGCLVIHALLNL. At 169–172 the chain is on the cytoplasmic side; sequence MSSS. A helical transmembrane segment spans residues 173–193; that stretch reads GVSYGCVASVLGYCLLPMVIL. Over 194 to 196 the chain is Extracellular; it reads SGC. The helical transmembrane segment at 197–217 threads the bilayer; it reads AMFFSLQGIFGIMSSLVIIGW. Topologically, residues 218–235 are cytoplasmic; sequence CSLSASKIFIAALHMEGQ. A helical transmembrane segment spans residues 236-256; that stretch reads QLLVAYPCAILYGLFALLTIF.

It belongs to the YIP1 family.

Its subcellular location is the endoplasmic reticulum membrane. It is found in the golgi apparatus. The protein resides in the cis-Golgi network membrane. The protein localises to the trans-Golgi network membrane. The chain is Protein YIPF7 (YIPF7) from Homo sapiens (Human).